A 120-amino-acid polypeptide reads, in one-letter code: Large ribosomal subunit protein uL22 (120 aa).

This sequence belongs to the universal ribosomal protein uL22 family. In terms of assembly, part of the 50S ribosomal subunit.

Functionally, this protein binds specifically to 23S rRNA; its binding is stimulated by other ribosomal proteins, e.g. L4, L17, and L20. It is important during the early stages of 50S assembly. It makes multiple contacts with different domains of the 23S rRNA in the assembled 50S subunit and ribosome. The globular domain of the protein is located near the polypeptide exit tunnel on the outside of the subunit, while an extended beta-hairpin is found that lines the wall of the exit tunnel in the center of the 70S ribosome. This Crocosphaera subtropica (strain ATCC 51142 / BH68) (Cyanothece sp. (strain ATCC 51142)) protein is Large ribosomal subunit protein uL22.